Reading from the N-terminus, the 373-residue chain is tRNA-specific 2-thiouridylase MnmA (373 aa).

ATP is bound by residues G12–S19 and M38. Positions N98–D100 are interaction with target base in tRNA. The active-site Nucleophile is C103. C103 and C200 are joined by a disulfide. G127 is an ATP binding site. Residues K150–Q152 are interaction with tRNA. C200 functions as the Cysteine persulfide intermediate in the catalytic mechanism. The interaction with tRNA stretch occupies residues R312 to Y313.

Belongs to the MnmA/TRMU family.

The protein resides in the cytoplasm. The catalysed reaction is S-sulfanyl-L-cysteinyl-[protein] + uridine(34) in tRNA + AH2 + ATP = 2-thiouridine(34) in tRNA + L-cysteinyl-[protein] + A + AMP + diphosphate + H(+). In terms of biological role, catalyzes the 2-thiolation of uridine at the wobble position (U34) of tRNA, leading to the formation of s(2)U34. This chain is tRNA-specific 2-thiouridylase MnmA, found in Streptococcus pneumoniae (strain ATCC 700669 / Spain 23F-1).